Here is a 1227-residue protein sequence, read N- to C-terminus: ATP-dependent helicase/nuclease subunit A (1227 aa).

One can recognise a UvrD-like helicase ATP-binding domain in the interval 3–477 (VKYTPDQARA…IIFAENFRSS (475 aa)). 24-31 (ASAGSGKT) provides a ligand contact to ATP. The UvrD-like helicase C-terminal domain occupies 505 to 788 (GQLKFAAGYD…KLMTIHASKG (284 aa)).

It belongs to the helicase family. AddA subfamily. In terms of assembly, heterodimer of AddA and AddB/RexB. Requires Mg(2+) as cofactor.

It catalyses the reaction Couples ATP hydrolysis with the unwinding of duplex DNA by translocating in the 3'-5' direction.. The enzyme catalyses ATP + H2O = ADP + phosphate + H(+). Functionally, the heterodimer acts as both an ATP-dependent DNA helicase and an ATP-dependent, dual-direction single-stranded exonuclease. Recognizes the chi site generating a DNA molecule suitable for the initiation of homologous recombination. The AddA nuclease domain is required for chi fragment generation; this subunit has the helicase and 3' -&gt; 5' nuclease activities. This Lactobacillus delbrueckii subsp. bulgaricus (strain ATCC 11842 / DSM 20081 / BCRC 10696 / JCM 1002 / NBRC 13953 / NCIMB 11778 / NCTC 12712 / WDCM 00102 / Lb 14) protein is ATP-dependent helicase/nuclease subunit A.